The following is a 460-amino-acid chain: tRNA modification GTPase MnmE (460 aa).

3 residues coordinate (6S)-5-formyl-5,6,7,8-tetrahydrofolate: Arg29, Glu91, and Lys132. The region spanning Gly227–Gly383 is the TrmE-type G domain. A K(+)-binding site is contributed by Asn237. Residues Asn237–Ser242, Thr256–Thr262, and Asp281–Gly284 contribute to the GTP site. Ser241 contributes to the Mg(2+) binding site. Thr256, Ile258, and Thr261 together coordinate K(+). Thr262 lines the Mg(2+) pocket. Residue Lys460 participates in (6S)-5-formyl-5,6,7,8-tetrahydrofolate binding.

The protein belongs to the TRAFAC class TrmE-Era-EngA-EngB-Septin-like GTPase superfamily. TrmE GTPase family. Homodimer. Heterotetramer of two MnmE and two MnmG subunits. K(+) serves as cofactor.

It localises to the cytoplasm. Its function is as follows. Exhibits a very high intrinsic GTPase hydrolysis rate. Involved in the addition of a carboxymethylaminomethyl (cmnm) group at the wobble position (U34) of certain tRNAs, forming tRNA-cmnm(5)s(2)U34. This chain is tRNA modification GTPase MnmE, found in Prochlorococcus marinus (strain AS9601).